The following is an 873-amino-acid chain: Inner centromere protein A (873 aa).

Disordered stretches follow at residues 50–124 (AEPE…KRMT), 237–270 (PANE…VVRK), 282–452 (FSLA…PPPH), 484–535 (KRNT…KVRR), 566–649 (QIDE…LAEQ), 683–736 (LERA…EQAA), and 781–800 (DLNS…PIPA). The segment covering 60–69 (SQKRRRKKRT) has biased composition (basic residues). The segment covering 87–105 (RQSNASWSSSVRRLSVRNQ) has biased composition (low complexity). The span at 239 to 254 (NEQQLNLSNQSATPTG) shows a compositional bias: polar residues. Residues 261–270 (SVRRSLVVRK) show a composition bias toward basic residues. The span at 286-297 (SKRESMTREAVR) shows a compositional bias: basic and acidic residues. The span at 314–325 (SSTSSQRSYQSS) shows a compositional bias: low complexity. A compositionally biased stretch (pro residues) spans 437–452 (PSPPCPPSKIVRPPPH). 4 stretches are compositionally biased toward basic and acidic residues: residues 491-535 (TDPK…KVRR), 566-584 (QIDE…EEKA), 591-649 (KKQE…LAEQ), and 683-733 (LERA…KAKE). The SAH stretch occupies residues 494-707 (KTEEKERQRL…EERKKREQQE (214 aa)). The interval 782-856 (LNSDDSTDDE…RTSSAVWHSP (75 aa)) is IN box. Phosphoserine occurs at positions 849 and 850.

It belongs to the INCENP family. As to quaternary structure, component of the CPC composed of survivin/birc5, incenp, cdca8/borealin and/or cdca9/dasra-A, and aurkb/aurora-B. Interacts (via C-terminus) with aurkb (via N-terminus and kinase domain). Interacts (via N-terminus) with birc5.1, birc5.2, cdca8 and cdca9. Interacts with mtus1.

The protein localises to the nucleus. It localises to the chromosome. Its subcellular location is the centromere. The protein resides in the cytoplasm. It is found in the cytoskeleton. The protein localises to the spindle. It localises to the midbody. Its subcellular location is the kinetochore. Functionally, component of the chromosomal passenger complex (CPC), a complex that acts as a key regulator of mitosis. The CPC complex has essential functions at the centromere in ensuring correct chromosome alignment and segregation and is required for chromatin-induced microtubule stabilization and spindle assembly. Acts as a scaffold regulating CPC localization and activity. The C-terminus associates with aurkb/aurora-B, the N-terminus associated with cdca8/borealin and/or cdca9/dasra-A tethers the CPC to the inner centromere, and the microtubule binding activity within the central SAH domain directs aurkb/aurora-B toward substrates near microtubules. Activates aurkb. The sequence is that of Inner centromere protein A (incenp-a) from Xenopus laevis (African clawed frog).